The following is a 679-amino-acid chain: Methionine--tRNA ligase (679 aa).

Positions 15–25 match the 'HIGH' region motif; sequence PYANGPVHIGH. Residues cysteine 147, cysteine 150, cysteine 160, and cysteine 163 each contribute to the Zn(2+) site. The 'KMSKS' region motif lies at 332–336; the sequence is KISTS. Threonine 335 provides a ligand contact to ATP. The region spanning 578–679 is the tRNA-binding domain; sequence DFMKLDIRVG…REVKPGSEVK (102 aa).

The protein belongs to the class-I aminoacyl-tRNA synthetase family. MetG type 1 subfamily. Homodimer. The cofactor is Zn(2+).

The protein resides in the cytoplasm. It carries out the reaction tRNA(Met) + L-methionine + ATP = L-methionyl-tRNA(Met) + AMP + diphosphate. In terms of biological role, is required not only for elongation of protein synthesis but also for the initiation of all mRNA translation through initiator tRNA(fMet) aminoacylation. This is Methionine--tRNA ligase from Bacteroides fragilis (strain ATCC 25285 / DSM 2151 / CCUG 4856 / JCM 11019 / LMG 10263 / NCTC 9343 / Onslow / VPI 2553 / EN-2).